The chain runs to 134 residues: Phosphoribosyl-AMP cyclohydrolase (134 aa).

Aspartate 80 lines the Mg(2+) pocket. Cysteine 81 is a binding site for Zn(2+). Residues aspartate 82 and aspartate 84 each contribute to the Mg(2+) site. Zn(2+) is bound by residues cysteine 98 and cysteine 105.

Belongs to the PRA-CH family. Homodimer. Requires Mg(2+) as cofactor. Zn(2+) is required as a cofactor.

Its subcellular location is the cytoplasm. It catalyses the reaction 1-(5-phospho-beta-D-ribosyl)-5'-AMP + H2O = 1-(5-phospho-beta-D-ribosyl)-5-[(5-phospho-beta-D-ribosylamino)methylideneamino]imidazole-4-carboxamide. It participates in amino-acid biosynthesis; L-histidine biosynthesis; L-histidine from 5-phospho-alpha-D-ribose 1-diphosphate: step 3/9. In terms of biological role, catalyzes the hydrolysis of the adenine ring of phosphoribosyl-AMP. The protein is Phosphoribosyl-AMP cyclohydrolase of Bordetella pertussis (strain Tohama I / ATCC BAA-589 / NCTC 13251).